The primary structure comprises 214 residues: Orotate phosphoribosyltransferase (214 aa).

5-phospho-alpha-D-ribose 1-diphosphate-binding positions include arginine 125, lysine 126, lysine 129, histidine 131, and 151–159 (EDTSTTGNS). Threonine 155 and arginine 183 together coordinate orotate.

This sequence belongs to the purine/pyrimidine phosphoribosyltransferase family. PyrE subfamily. Homodimer. Mg(2+) is required as a cofactor.

It catalyses the reaction orotidine 5'-phosphate + diphosphate = orotate + 5-phospho-alpha-D-ribose 1-diphosphate. The protein operates within pyrimidine metabolism; UMP biosynthesis via de novo pathway; UMP from orotate: step 1/2. Functionally, catalyzes the transfer of a ribosyl phosphate group from 5-phosphoribose 1-diphosphate to orotate, leading to the formation of orotidine monophosphate (OMP). This Tropheryma whipplei (strain Twist) (Whipple's bacillus) protein is Orotate phosphoribosyltransferase.